The primary structure comprises 189 residues: dCTP deaminase (189 aa).

DCTP is bound by residues 112-117 (KSTYAR), 136-138 (TLE), Gln-157, Tyr-171, and Gln-181. The active-site Proton donor/acceptor is Glu-138.

It belongs to the dCTP deaminase family. In terms of assembly, homotrimer.

The enzyme catalyses dCTP + H2O + H(+) = dUTP + NH4(+). The protein operates within pyrimidine metabolism; dUMP biosynthesis; dUMP from dCTP (dUTP route): step 1/2. Catalyzes the deamination of dCTP to dUTP. The protein is dCTP deaminase of Xanthomonas campestris pv. campestris (strain 8004).